A 434-amino-acid polypeptide reads, in one-letter code: MVSSLFINPFSEDAREIVRKYGSLDTIDDTRDELLEIGRRTRGQNLADNSLLPASIAELAVKRLEWYLRRQRKDFNHRDYAYLMNPEIEEYDVLAFYILAQAAGAGFMKASREARLVVESAGAMVEDRLNVFGGEREEIMAEVLYELGSEGLRWTELADLLGSGKLKLTDLILKEGRVIIDRDEFITSFQDSIRDRSPDRLYDILVGLEVRETMISRMIMQRTEEYIGMVREMSSTVEVHPLILETAERIRETVEEIMSFTGGPVKSARPGKLVQEAFPPCIRGTLDGVRSGNRNDAIVLLLTSFISYARLYPSVFRDRTPMKVSDLDPDLRITLGEILPVIYDAADRCEPPLFEDDPQEKLNITAKLGFGVHDMPELENEGESKWYTPMSCEKIKIHLPDLCRPDKLCSSISNPLTYYNRKRWKLRSSGEKEE.

Positions 281, 392, 403, and 409 each coordinate [4Fe-4S] cluster.

Belongs to the eukaryotic-type primase large subunit family. As to quaternary structure, heterodimer of a small subunit (PriS) and a large subunit (PriL). [4Fe-4S] cluster is required as a cofactor.

Regulatory subunit of DNA primase, an RNA polymerase that catalyzes the synthesis of short RNA molecules used as primers for DNA polymerase during DNA replication. Stabilizes and modulates the activity of the small subunit, increasing the rate of DNA synthesis, and conferring RNA synthesis capability. The DNA polymerase activity may enable DNA primase to also catalyze primer extension after primer synthesis. May also play a role in DNA repair. This Methanothermobacter thermautotrophicus (strain ATCC 29096 / DSM 1053 / JCM 10044 / NBRC 100330 / Delta H) (Methanobacterium thermoautotrophicum) protein is DNA primase large subunit PriL.